Reading from the N-terminus, the 251-residue chain is Aliphatic sulfonates import ATP-binding protein SsuB (251 aa).

Residues 3 to 231 enclose the ABC transporter domain; it reads VSINEVSKYF…PRSKNSESFQ (229 aa). An ATP-binding site is contributed by 39 to 46; that stretch reads GPSGCGKS.

Belongs to the ABC transporter superfamily. Aliphatic sulfonates importer (TC 3.A.1.17.2) family. As to quaternary structure, the complex is composed of two ATP-binding proteins (SsuB), two transmembrane proteins (SsuC) and a solute-binding protein (SsuA).

The protein localises to the cell membrane. It carries out the reaction ATP + H2O + aliphatic sulfonate-[sulfonate-binding protein]Side 1 = ADP + phosphate + aliphatic sulfonateSide 2 + [sulfonate-binding protein]Side 1.. Its function is as follows. Part of the ABC transporter complex SsuABC involved in aliphatic sulfonates import. Responsible for energy coupling to the transport system. The protein is Aliphatic sulfonates import ATP-binding protein SsuB of Bacillus cereus (strain ZK / E33L).